The sequence spans 554 residues: Intraflagellar transport protein 56 (554 aa).

A disordered region spans residues 1 to 27 (MMLSRAKPAVGGESPHTDKRKKKGRKI). The span at 18-27 (DKRKKKGRKI) shows a compositional bias: basic residues. TPR repeat units lie at residues 57–90 (EDTN…ENCN), 92–125 (EVWV…LQNR), 151–184 (KEDQ…NREY), and 468–501 (ANDC…EGKR).

Belongs to the IFT56 family. As to quaternary structure, component of the IFT complex B. Interacts with IFT46; the interaction is direct.

Its subcellular location is the cell projection. It is found in the cilium. Its function is as follows. Component of the intraflagellar transport (IFT) complex B required for transport of proteins in the motile cilium. Required for transport of specific ciliary cargo proteins related to motility, while it is neither required for IFT complex B assembly or motion nor for cilium assembly. Required for efficient coupling between the accumulation of GLI2 and GLI3 at the ciliary tips and their dissociation from the negative regulator SUFU. Plays a key role in maintaining the integrity of the IFT complex B and the proper ciliary localization of the IFT complex B components. Not required for IFT complex A ciliary localization or function. Essential for maintaining proper microtubule organization within the ciliary axoneme. The chain is Intraflagellar transport protein 56 from Rattus norvegicus (Rat).